The sequence spans 166 residues: MHALNIFPCGLFSYIALLCLEASIQEESSDLTGSDTLLWCNLDLDCLNNSSCCRSSSSSERPDFLNLESLVSFTFWEPLKFNNISSKNGINSLYSNSSSALITCSGAMVFLASLSAISEAIEDRIIMNSMPELMMISLASLVNIKSWSSISDIIFCTVAKIIQCFL.

The next 3 helical transmembrane spans lie at 4–24 (LNIF…EASI), 101–121 (LITC…SEAI), and 146–166 (SWSS…QCFL).

The protein resides in the membrane. This is an uncharacterized protein from Saccharomyces cerevisiae (strain ATCC 204508 / S288c) (Baker's yeast).